The primary structure comprises 142 residues: Transcriptional regulator MraZ (142 aa).

SpoVT-AbrB domains follow at residues 5–47 (THSP…SERE) and 76–119 (ASDE…DAQA).

This sequence belongs to the MraZ family. Forms oligomers.

The protein localises to the cytoplasm. Its subcellular location is the nucleoid. The polypeptide is Transcriptional regulator MraZ (Arthrobacter sp. (strain FB24)).